The sequence spans 429 residues: Glutamate-1-semialdehyde 2,1-aminomutase 2 (429 aa).

N6-(pyridoxal phosphate)lysine is present on Lys-268.

The protein belongs to the class-III pyridoxal-phosphate-dependent aminotransferase family. HemL subfamily. In terms of assembly, homodimer. It depends on pyridoxal 5'-phosphate as a cofactor.

The protein localises to the cytoplasm. It carries out the reaction (S)-4-amino-5-oxopentanoate = 5-aminolevulinate. Its pathway is porphyrin-containing compound metabolism; protoporphyrin-IX biosynthesis; 5-aminolevulinate from L-glutamyl-tRNA(Glu): step 2/2. This is Glutamate-1-semialdehyde 2,1-aminomutase 2 from Bacillus mycoides (strain KBAB4) (Bacillus weihenstephanensis).